A 373-amino-acid polypeptide reads, in one-letter code: Phospho-N-acetylmuramoyl-pentapeptide-transferase (373 aa).

Transmembrane regions (helical) follow at residues 28–48, 72–92, 94–114, 135–155, 177–197, 212–232, 252–272, 276–296, 301–321, and 350–370; these read LLTV…TIAY, TPTM…LCWA, LANP…AVGW, YFWL…IASQ, IVPL…YFVI, GLAI…SYVS, VTIV…YNAH, VFMG…IAVM, IAFA…ILQV, and QVVV…LMTL.

This sequence belongs to the glycosyltransferase 4 family. MraY subfamily. Requires Mg(2+) as cofactor.

The protein resides in the cell inner membrane. The enzyme catalyses UDP-N-acetyl-alpha-D-muramoyl-L-alanyl-gamma-D-glutamyl-meso-2,6-diaminopimeloyl-D-alanyl-D-alanine + di-trans,octa-cis-undecaprenyl phosphate = di-trans,octa-cis-undecaprenyl diphospho-N-acetyl-alpha-D-muramoyl-L-alanyl-D-glutamyl-meso-2,6-diaminopimeloyl-D-alanyl-D-alanine + UMP. Its pathway is cell wall biogenesis; peptidoglycan biosynthesis. Its function is as follows. Catalyzes the initial step of the lipid cycle reactions in the biosynthesis of the cell wall peptidoglycan: transfers peptidoglycan precursor phospho-MurNAc-pentapeptide from UDP-MurNAc-pentapeptide onto the lipid carrier undecaprenyl phosphate, yielding undecaprenyl-pyrophosphoryl-MurNAc-pentapeptide, known as lipid I. The sequence is that of Phospho-N-acetylmuramoyl-pentapeptide-transferase from Psychrobacter sp. (strain PRwf-1).